A 308-amino-acid chain; its full sequence is Glutaminase (308 aa).

Serine 66, asparagine 117, glutamate 161, asparagine 168, tyrosine 192, tyrosine 244, and valine 262 together coordinate substrate.

It belongs to the glutaminase family. Homotetramer.

The catalysed reaction is L-glutamine + H2O = L-glutamate + NH4(+). The sequence is that of Glutaminase from Yersinia pestis bv. Antiqua (strain Nepal516).